We begin with the raw amino-acid sequence, 120 residues long: Large ribosomal subunit protein bL19 (120 aa).

It belongs to the bacterial ribosomal protein bL19 family.

Its function is as follows. This protein is located at the 30S-50S ribosomal subunit interface and may play a role in the structure and function of the aminoacyl-tRNA binding site. This Chlorobium luteolum (strain DSM 273 / BCRC 81028 / 2530) (Pelodictyon luteolum) protein is Large ribosomal subunit protein bL19.